Reading from the N-terminus, the 245-residue chain is Tegument protein UL51 homolog (245 aa).

C10 is lipidated: S-palmitoyl cysteine; by host. The interval 225–245 (PVKSNLKSKHKPKRKASLVAV) is disordered. The span at 230–245 (LKSKHKPKRKASLVAV) shows a compositional bias: basic residues.

Belongs to the herpesviridae UL51 family. In terms of assembly, oligomerizes. Interacts with ORF55; this interaction mediates ORF55 incorporation to virions. In terms of processing, phosphorylated. Palmitoylation is necessary for Golgi localization.

Its subcellular location is the virion tegument. The protein localises to the host cytoplasm. It localises to the host Golgi apparatus. Plays several roles during the time course of infection, including egress of virus particles from the perinuclear space and secondary envelopment of cytoplasmic capsids that bud into specific trans-Golgi network (TGN)-derived membranes. This is Tegument protein UL51 homolog from Equine herpesvirus 1 (strain Ab4p) (EHV-1).